The sequence spans 866 residues: Dimethylglycine dehydrogenase, mitochondrial (866 aa).

The N-terminal 50 residues, 1-50 (MLRPGAQLLRGLLLRSCPLQGSPGRPRSVCGREGEEKPPLSAETQWKDRA), are a transit peptide targeting the mitochondrion. A disordered region spans residues 20 to 42 (QGSPGRPRSVCGREGEEKPPLSA). Residues 59 to 60 (CV), 80 to 81 (EK), and 87 to 95 (GSTWHAAGL) contribute to the FAD site. H91 bears the Tele-8alpha-FAD histidine mark. K114 carries the post-translational modification N6-acetyllysine. K148 carries the post-translational modification N6-acetyllysine; alternate. The residue at position 148 (K148) is an N6-succinyllysine; alternate. K168 carries the post-translational modification N6-acetyllysine. V219 provides a ligand contact to FAD. Position 223 is an N6-acetyllysine (K223). FAD is bound at residue W251. An N6-succinyllysine mark is found at K317 and K319. An N6-acetyllysine mark is found at K335 and K360. 397 to 402 (FGYGII) is an FAD binding site. N6-acetyllysine; alternate occurs at positions 434 and 523. An N6-succinyllysine; alternate mark is found at K434 and K523. (6S)-5,6,7,8-tetrahydrofolate is bound at residue 580–582 (ELT). K655 carries the N6-acetyllysine; alternate modification. The residue at position 655 (K655) is an N6-succinyllysine; alternate. Residues Y676, 683-685 (ELY), and Y744 contribute to the (6S)-5,6,7,8-tetrahydrofolate site. The residue at position 764 (K764) is an N6-acetyllysine. K795 carries the post-translational modification N6-succinyllysine.

It belongs to the GcvT family. As to quaternary structure, monomer. The cofactor is FAD.

The protein resides in the mitochondrion. The enzyme catalyses (6S)-5,6,7,8-tetrahydrofolyl-(gamma-L-Glu)(n) + N,N-dimethylglycine + oxidized [electron-transfer flavoprotein] + H(+) = (6R)-5,10-methylenetetrahydrofolyl-(gamma-L-Glu)(n) + sarcosine + reduced [electron-transfer flavoprotein]. It participates in amine and polyamine degradation; betaine degradation; sarcosine from betaine: step 2/2. In terms of biological role, catalyzes the demethylation of N,N-dimethylglycine to sarcosine. Also has activity with sarcosine in vitro. In Homo sapiens (Human), this protein is Dimethylglycine dehydrogenase, mitochondrial (DMGDH).